The chain runs to 616 residues: MALLQISEPGLSAAPHQRRLAAGIDLGTTNSLVATVRSGQAETLADHEGRHLLPSVVHYQQQGHSVGYDARTNAALDTANTISSVKRLMGRSLADIQQRYPHLPYQFQASENGLPMIETAAGLLNPVRVSADILKALAARATEALAGELDGVVITVPAYFDDAQRQGTKDAARLAGLHVLRLLNEPTAAAIAYGLDSGQEGVIAVYDLGGGTFDISILRLSRGVFEVLATGGDSALGGDDFDHLLADYIREQAGIPDRSDNRVQRELLDAAIAAKIALSDADSVTVNVAGWQGEISREQFNELIAPLVKRTLLACRRALKDAGVEADEVLEVVMVGGSTRVPLVRERVGEFFGRPPLTSIDPDKVVAIGAAIQADILVGNKPDSEMLLLDVIPLSLGLETMGGLVEKVIPRNTTIPVARAQDFTTFKDGQTAMSIHVMQGERELVQDCRSLARFALRGIPALPAGGAHIRVTFQVDADGLLSVTAMEKSTGVEASIQVKPSYGLTDSEIASMIKDSMSYAEQDVKARMLAEQKVEAARVLESLHGALAADAALLSAAERQDIDDAAAHLSEVAQGDDVDAIEQAIKNVDKQTQDFAARRMDQSVRRALKGHSVDEV.

Belongs to the heat shock protein 70 family.

In terms of biological role, chaperone involved in the maturation of iron-sulfur cluster-containing proteins. Has a low intrinsic ATPase activity which is markedly stimulated by HscB. Involved in the maturation of IscU. The chain is Chaperone protein HscA from Escherichia coli (strain SMS-3-5 / SECEC).